The chain runs to 176 residues: Membrane glycoprotein UL144 (176 aa).

Positions M1 to T20 are cleaved as a signal peptide. TNFR-Cys repeat units follow at residues V22–C56 and P58–C95. 6 cysteine pairs are disulfide-bonded: C23-C34, C35-C48, C38-C56, C59-C71, C74-C87, and C77-C95. A helical transmembrane segment spans residues L134–I154.

In terms of assembly, interacts with host TRIM23; this interaction causes auto-ubiquitination of TRAF6, leading to NF-kappaB activation.

It is found in the membrane. Its function is as follows. Activates NF-kappaB in a tumor necrosis factor receptor (TNFR)-associated factor 6 (TRAF6)-dependent manner, causing the up-regulation of the chemokine CCL22. This is Membrane glycoprotein UL144 (UL144) from Homo sapiens (Human).